Consider the following 105-residue polypeptide: Larval cuticle protein 65Ag1 (105 aa).

An N-terminal signal peptide occupies residues 1-18 (MKFLIVFVALFAVALAAP). Residues 34–103 (PESFKYDWET…PQGAHLPVAP (70 aa)) enclose the Chitin-binding type R&amp;R domain.

Component of the cuticle of the larva. The chain is Larval cuticle protein 65Ag1 from Drosophila melanogaster (Fruit fly).